We begin with the raw amino-acid sequence, 86 residues long: Small ribosomal subunit protein bS16 (86 aa).

Belongs to the bacterial ribosomal protein bS16 family.

This is Small ribosomal subunit protein bS16 from Xanthomonas campestris pv. campestris (strain 8004).